We begin with the raw amino-acid sequence, 203 residues long: Small ribosomal subunit protein uS4c (203 aa).

One can recognise an S4 RNA-binding domain in the interval 89–152; it reads MRLDNILFRL…QSRTLIQNSL (64 aa).

Belongs to the universal ribosomal protein uS4 family. As to quaternary structure, part of the 30S ribosomal subunit. Contacts protein S5. The interaction surface between S4 and S5 is involved in control of translational fidelity.

It is found in the plastid. One of the primary rRNA binding proteins, it binds directly to 16S rRNA where it nucleates assembly of the body of the 30S subunit. In terms of biological role, with S5 and S12 plays an important role in translational accuracy. This chain is Small ribosomal subunit protein uS4c (rps4), found in Orobanche minor (Small broomrape).